Reading from the N-terminus, the 975-residue chain is Macrophage colony-stimulating factor 1 receptor 1 (975 aa).

An N-terminal signal peptide occupies residues 1 to 17; it reads MQSFLPLLMGIMASASS. Over 18 to 519 the chain is Extracellular; the sequence is VEWRHPVIWF…VEVSDKLFTS (502 aa). Ig-like C2-type domains lie at 34–113, 125–208, 221–310, 329–407, and 404–513; these read SSEV…VYVK, SLRV…INVI, MDEY…LLVV, GLSV…FHVK, and FHVK…VEVS. 3 disulfide bridges follow: Cys49–Cys93, Cys140–Cys189, and Cys236–Cys292. 9 N-linked (GlcNAc...) asparagine glycosylation sites follow: Asn156, Asn165, Asn246, Asn250, Asn289, Asn301, Asn399, Asn420, and Asn451. A disulfide bridge links Cys426 with Cys495. A helical transmembrane segment spans residues 520–540; that stretch reads TLIGAAGVLAIFLLLLVFLLY. At 541-975 the chain is on the cytoplasmic side; sequence KYKQKPRFEI…LMKTNNYQFC (435 aa). The regulatory juxtamembrane domain stretch occupies residues 544–576; the sequence is QKPRFEIRWKIIEAREGNNYTFIDPTQLPYNEK. Residue Tyr563 is modified to Phosphotyrosine; by autocatalysis. One can recognise a Protein kinase domain in the interval 584–918; sequence LKLGKVLGAG…MISQMINRLL (335 aa). ATP is bound by residues 590 to 598 and Lys619; that span reads LGAGAFGKV. 2 positions are modified to phosphotyrosine; by autocatalysis: Tyr702 and Tyr726. Residue Asp782 is the Proton acceptor of the active site. An activation loop region spans residues 800–822; it reads DFGLARDIMNDSNYVVKGNARLP. Tyr813 and Tyr929 each carry phosphotyrosine; by autocatalysis. The disordered stretch occupies residues 939-963; sequence EGEACDEPKRYDPPCERSCDHEEEE. Over residues 944–958 the composition is skewed to basic and acidic residues; it reads DEPKRYDPPCERSCD. Tyr972 is modified (phosphotyrosine; by autocatalysis).

Belongs to the protein kinase superfamily. Tyr protein kinase family. CSF-1/PDGF receptor subfamily. Monomer. Homodimer. Interacts with CSF1. Post-translationally, autophosphorylated in response to CSF1 binding. autophosphorylation, leading to its degradation. Ubiquitinated. Becomes rapidly polyubiquitinated after autophosphorylation, leading to its degradation.

The protein localises to the cell membrane. It carries out the reaction L-tyrosyl-[protein] + ATP = O-phospho-L-tyrosyl-[protein] + ADP + H(+). With respect to regulation, present in an inactive conformation in the absence of bound ligand. CSF1 binding leads to dimerization and activation by autophosphorylation on tyrosine residues. In terms of biological role, tyrosine-protein kinase that acts as a cell-surface receptor for CSF1 and plays an essential role in the regulation of survival, proliferation and differentiation of hematopoietic precursor cells, especially mononuclear phagocytes, such as macrophages and monocytes. Plays an important role in innate immunity and in inflammatory processes. Plays an important role in the regulation of osteoclast proliferation and differentiation, the regulation of bone resorption, and is required for normal bone development. Promotes reorganization of the actin cytoskeleton, regulates formation of membrane ruffles, cell adhesion and cell migration. Activates several signaling pathways in response to ligand binding. In Takifugu rubripes (Japanese pufferfish), this protein is Macrophage colony-stimulating factor 1 receptor 1 (csf1r1).